We begin with the raw amino-acid sequence, 257 residues long: Tryptophan synthase alpha chain (257 aa).

Residues Glu51 and Asp62 each act as proton acceptor in the active site.

This sequence belongs to the TrpA family. Tetramer of two alpha and two beta chains.

It catalyses the reaction (1S,2R)-1-C-(indol-3-yl)glycerol 3-phosphate + L-serine = D-glyceraldehyde 3-phosphate + L-tryptophan + H2O. It functions in the pathway amino-acid biosynthesis; L-tryptophan biosynthesis; L-tryptophan from chorismate: step 5/5. Functionally, the alpha subunit is responsible for the aldol cleavage of indoleglycerol phosphate to indole and glyceraldehyde 3-phosphate. This chain is Tryptophan synthase alpha chain, found in Nitratidesulfovibrio vulgaris (strain ATCC 29579 / DSM 644 / CCUG 34227 / NCIMB 8303 / VKM B-1760 / Hildenborough) (Desulfovibrio vulgaris).